The primary structure comprises 195 residues: MPHAEKGLTVGLFGGSFNPPHAGHALVAEIALRRLALDQLWWMVTPGNPLKSTRELAPLAERLQLSEQIARNPKIKVTAFEAAHHVRYTADTLALVKARNPGVDFVWIMGADSLRDFHRWQRWREIVLTFPIAVIDRPGATLSFLSSVVAKTFDYARIDEGDAPLLARMRAPAWTFIHGPRSSLSSSAIRKMAKG.

Belongs to the NadD family.

It carries out the reaction nicotinate beta-D-ribonucleotide + ATP + H(+) = deamido-NAD(+) + diphosphate. Its pathway is cofactor biosynthesis; NAD(+) biosynthesis; deamido-NAD(+) from nicotinate D-ribonucleotide: step 1/1. Functionally, catalyzes the reversible adenylation of nicotinate mononucleotide (NaMN) to nicotinic acid adenine dinucleotide (NaAD). This Mesorhizobium japonicum (strain LMG 29417 / CECT 9101 / MAFF 303099) (Mesorhizobium loti (strain MAFF 303099)) protein is Probable nicotinate-nucleotide adenylyltransferase.